Reading from the N-terminus, the 288-residue chain is Glucose-1-phosphate thymidylyltransferase (288 aa).

Gly8 is a dTDP-alpha-D-glucose binding site. DTTP is bound by residues Gly8, Gly11, Thr12, Arg13, Lys23, Gln24, Gln80, Gly85, and Asp108. DTDP-alpha-D-glucose contacts are provided by Lys23, Gln24, Gln80, Gly85, Asp108, Asn109, Gly143, Glu158, Lys159, Val169, and Asp222. Asp108 contributes to the Mg(2+) binding site. A Mg(2+)-binding site is contributed by Asp222.

It belongs to the glucose-1-phosphate thymidylyltransferase family. The cofactor is Mg(2+).

The enzyme catalyses dTTP + alpha-D-glucose 1-phosphate + H(+) = dTDP-alpha-D-glucose + diphosphate. It participates in carbohydrate biosynthesis; dTDP-L-rhamnose biosynthesis. In terms of biological role, catalyzes the conversion of glucose-1-phosphate and dTTP to dTDP-glucose and pyrophosphate. Involved in the biosynthesis of the dTDP-L-rhamnose which is a component of the critical linker, D-N-acetylglucosamine-L-rhamnose disaccharide, which connects the galactan region of arabinogalactan to peptidoglycan via a phosphodiester linkage. In Mycolicibacterium smegmatis (strain ATCC 700084 / mc(2)155) (Mycobacterium smegmatis), this protein is Glucose-1-phosphate thymidylyltransferase (rmlA).